Consider the following 361-residue polypeptide: Phospho-N-acetylmuramoyl-pentapeptide-transferase (361 aa).

The next 10 helical transmembrane spans lie at 28-48, 74-94, 99-119, 133-153, 168-188, 203-223, 236-256, 263-283, 288-308, and 338-358; these read LAIIITLSLSFITGPILIEFL, TMGGIMIILSSCLSTLLLADL, IWITLFGFISFGIIGFMDDYA, SKLLLQGIISFIICVLLEYLD, LSLDLGYCYIVFAIFVIVGSS, VPIAFTAGSFALISYLVGNLI, TGELTVLCAGLVGSCLGFLWF, VFMGDTGSLSLGGVLGIISVI, IVLAIVGGLFVIETASVILQV, and KVVIRFWIISVIFALIGLSSL.

It belongs to the glycosyltransferase 4 family. MraY subfamily. Mg(2+) serves as cofactor.

It is found in the cell inner membrane. The catalysed reaction is UDP-N-acetyl-alpha-D-muramoyl-L-alanyl-gamma-D-glutamyl-meso-2,6-diaminopimeloyl-D-alanyl-D-alanine + di-trans,octa-cis-undecaprenyl phosphate = di-trans,octa-cis-undecaprenyl diphospho-N-acetyl-alpha-D-muramoyl-L-alanyl-D-glutamyl-meso-2,6-diaminopimeloyl-D-alanyl-D-alanine + UMP. It functions in the pathway cell wall biogenesis; peptidoglycan biosynthesis. Catalyzes the initial step of the lipid cycle reactions in the biosynthesis of the cell wall peptidoglycan: transfers peptidoglycan precursor phospho-MurNAc-pentapeptide from UDP-MurNAc-pentapeptide onto the lipid carrier undecaprenyl phosphate, yielding undecaprenyl-pyrophosphoryl-MurNAc-pentapeptide, known as lipid I. This is Phospho-N-acetylmuramoyl-pentapeptide-transferase from Rickettsia africae (strain ESF-5).